We begin with the raw amino-acid sequence, 184 residues long: Peptidyl-tRNA hydrolase (184 aa).

Residue tyrosine 13 coordinates tRNA. The active-site Proton acceptor is the histidine 18. 3 residues coordinate tRNA: phenylalanine 59, asparagine 61, and asparagine 105.

The protein belongs to the PTH family. As to quaternary structure, monomer.

The protein resides in the cytoplasm. It catalyses the reaction an N-acyl-L-alpha-aminoacyl-tRNA + H2O = an N-acyl-L-amino acid + a tRNA + H(+). In terms of biological role, hydrolyzes ribosome-free peptidyl-tRNAs (with 1 or more amino acids incorporated), which drop off the ribosome during protein synthesis, or as a result of ribosome stalling. Catalyzes the release of premature peptidyl moieties from peptidyl-tRNA molecules trapped in stalled 50S ribosomal subunits, and thus maintains levels of free tRNAs and 50S ribosomes. The chain is Peptidyl-tRNA hydrolase from Sulfurimonas denitrificans (strain ATCC 33889 / DSM 1251) (Thiomicrospira denitrificans (strain ATCC 33889 / DSM 1251)).